The primary structure comprises 251 residues: CDP-diacylglycerol pyrophosphatase (251 aa).

The helical transmembrane segment at 4–24 threads the bilayer; sequence AGLLFLVMIVIAVVAAGIGYW.

This sequence belongs to the Cdh family.

It localises to the cell inner membrane. The enzyme catalyses a CDP-1,2-diacyl-sn-glycerol + H2O = a 1,2-diacyl-sn-glycero-3-phosphate + CMP + 2 H(+). The protein operates within phospholipid metabolism; CDP-diacylglycerol degradation; phosphatidate from CDP-diacylglycerol: step 1/1. In Shigella boydii serotype 4 (strain Sb227), this protein is CDP-diacylglycerol pyrophosphatase.